A 212-amino-acid polypeptide reads, in one-letter code: Floral homeotic protein PMADS 2 (212 aa).

One can recognise an MADS-box domain in the interval 3–58 (RGKIEIKRIENSSNRQVTYSKRRNGIIKKAKEITVLCDAKVSLIIFGNSGKMHEYC). The 87-residue stretch at 84 to 170 (HENLSNEIDR…QYALHQKEMA (87 aa)) folds into the K-box domain.

In terms of tissue distribution, predominantly expressed in petals and stamens, less in carpels and sepals.

Its subcellular location is the nucleus. Functionally, transcription factor involved in the genetic control of flower development. This Petunia hybrida (Petunia) protein is Floral homeotic protein PMADS 2 (PMADS2).